A 405-amino-acid chain; its full sequence is Growth/differentiation factor 11 (405 aa).

The first 20 residues, 1–20 (MVLAAPLLLGFLLLALELRP), serve as a signal peptide directing secretion. A propeptide spanning residues 21 to 296 (RGEAAEGPAA…VLENTKRSRR (276 aa)) is cleaved from the precursor. The N-linked (GlcNAc...) asparagine glycan is linked to Asn92. 4 disulfides stabilise this stretch: Cys302-Cys312, Cys311-Cys370, Cys339-Cys402, and Cys343-Cys404.

Belongs to the TGF-beta family. In terms of assembly, homodimer; disulfide-linked. Interacts directly with ACVR2B. Interacts directly with ACVR2A. Interacts with ACVR1B, TGFBR1 and ACVR1C in an ACVR2B-dependent manner. Interacts with FST isoform 2/FS288. In terms of processing, synthesized as large precursor molecule that undergoes proteolytic cleavage by furin-like proteases. This produces an inactive form consisting of the mature C-terminal portion non-covalently bound to its cleaved N-terminal propeptide. Activation of the mature form requires additional cleavage of the propeptide by a tolloid-like metalloproteinase. As to expression, highly expressed in the developing limb bud, initially detected in the distal mesenchyme, and later localizing to regions around the developing bones. Is also expressed in adult dental pulp and brain.

The protein localises to the secreted. In terms of biological role, secreted signal that acts globally to regulate anterior/posterior axial patterning during development. May play critical roles in patterning both mesodermal and neural tissues. It is required for proper vertebral patterning and orofacial development. Signals through activin receptors type-2, ACVR2A and ACVR2B, and activin receptors type-1, ACVR1B, ACVR1C and TGFBR1 leading to the phosphorylation of SMAD2 and SMAD3. This Mus musculus (Mouse) protein is Growth/differentiation factor 11 (Gdf11).